Consider the following 309-residue polypeptide: NAD kinase (309 aa).

Residue aspartate 89 is the Proton acceptor of the active site. NAD(+)-binding positions include 89–90 (DG), 163–164 (NE), histidine 174, arginine 191, aspartate 193, and 204–209 (TAYALS).

Belongs to the NAD kinase family. A divalent metal cation serves as cofactor.

It localises to the cytoplasm. The catalysed reaction is NAD(+) + ATP = ADP + NADP(+) + H(+). Involved in the regulation of the intracellular balance of NAD and NADP, and is a key enzyme in the biosynthesis of NADP. Catalyzes specifically the phosphorylation on 2'-hydroxyl of the adenosine moiety of NAD to yield NADP. The polypeptide is NAD kinase (Shewanella sp. (strain ANA-3)).